A 183-amino-acid chain; its full sequence is ATP synthase subunit b, chloroplastic (183 aa).

The helical transmembrane segment at 28-48 threads the bilayer; the sequence is DIFEANVINILLLLFGLIYVL.

The protein belongs to the ATPase B chain family. In terms of assembly, F-type ATPases have 2 components, F(1) - the catalytic core - and F(0) - the membrane proton channel. F(1) has five subunits: alpha(3), beta(3), gamma(1), delta(1), epsilon(1). F(0) has four main subunits: a(1), b(1), b'(1) and c(10-14). The alpha and beta chains form an alternating ring which encloses part of the gamma chain. F(1) is attached to F(0) by a central stalk formed by the gamma and epsilon chains, while a peripheral stalk is formed by the delta, b and b' chains.

The protein localises to the plastid. It localises to the chloroplast thylakoid membrane. In terms of biological role, f(1)F(0) ATP synthase produces ATP from ADP in the presence of a proton or sodium gradient. F-type ATPases consist of two structural domains, F(1) containing the extramembraneous catalytic core and F(0) containing the membrane proton channel, linked together by a central stalk and a peripheral stalk. During catalysis, ATP synthesis in the catalytic domain of F(1) is coupled via a rotary mechanism of the central stalk subunits to proton translocation. Functionally, component of the F(0) channel, it forms part of the peripheral stalk, linking F(1) to F(0). The sequence is that of ATP synthase subunit b, chloroplastic from Pyropia yezoensis (Susabi-nori).